We begin with the raw amino-acid sequence, 212 residues long: Peptide methionine sulfoxide reductase MsrA (212 aa).

C52 is an active-site residue.

This sequence belongs to the MsrA Met sulfoxide reductase family.

It carries out the reaction L-methionyl-[protein] + [thioredoxin]-disulfide + H2O = L-methionyl-(S)-S-oxide-[protein] + [thioredoxin]-dithiol. It catalyses the reaction [thioredoxin]-disulfide + L-methionine + H2O = L-methionine (S)-S-oxide + [thioredoxin]-dithiol. In terms of biological role, has an important function as a repair enzyme for proteins that have been inactivated by oxidation. Catalyzes the reversible oxidation-reduction of methionine sulfoxide in proteins to methionine. This is Peptide methionine sulfoxide reductase MsrA from Salmonella paratyphi B (strain ATCC BAA-1250 / SPB7).